Here is a 234-residue protein sequence, read N- to C-terminus: tRNA (guanine-N(1)-)-methyltransferase (234 aa).

Residues G115 and 135-140 each bind S-adenosyl-L-methionine; that span reads VGDYIL.

It belongs to the RNA methyltransferase TrmD family. As to quaternary structure, homodimer.

It is found in the cytoplasm. The enzyme catalyses guanosine(37) in tRNA + S-adenosyl-L-methionine = N(1)-methylguanosine(37) in tRNA + S-adenosyl-L-homocysteine + H(+). Functionally, specifically methylates guanosine-37 in various tRNAs. The sequence is that of tRNA (guanine-N(1)-)-methyltransferase from Rickettsia typhi (strain ATCC VR-144 / Wilmington).